A 73-amino-acid chain; its full sequence is Small, acid-soluble spore protein C2 (73 aa).

This sequence belongs to the alpha/beta-type SASP family.

Functionally, SASP are bound to spore DNA. They are double-stranded DNA-binding proteins that cause DNA to change to an a-like conformation. They protect the DNA backbone from chemical and enzymatic cleavage and are thus involved in dormant spore's high resistance to UV light. This is Small, acid-soluble spore protein C2 (SASP-C2) from Priestia megaterium (Bacillus megaterium).